Reading from the N-terminus, the 216-residue chain is Octanoyltransferase (216 aa).

The region spanning 32-211 (QEASEMLWFL…RFPYFLEALQ (180 aa)) is the BPL/LPL catalytic domain. Substrate is bound by residues 71 to 78 (RGGRYTYH), 142 to 144 (AIG), and 155 to 157 (GFS). The active-site Acyl-thioester intermediate is Cys173.

It belongs to the LipB family.

The protein localises to the cytoplasm. The catalysed reaction is octanoyl-[ACP] + L-lysyl-[protein] = N(6)-octanoyl-L-lysyl-[protein] + holo-[ACP] + H(+). It functions in the pathway protein modification; protein lipoylation via endogenous pathway; protein N(6)-(lipoyl)lysine from octanoyl-[acyl-carrier-protein]: step 1/2. In terms of biological role, catalyzes the transfer of endogenously produced octanoic acid from octanoyl-acyl-carrier-protein onto the lipoyl domains of lipoate-dependent enzymes. Lipoyl-ACP can also act as a substrate although octanoyl-ACP is likely to be the physiological substrate. The chain is Octanoyltransferase from Zymomonas mobilis subsp. mobilis (strain ATCC 31821 / ZM4 / CP4).